The chain runs to 418 residues: D-amino acid dehydrogenase (418 aa).

3–17 contributes to the FAD binding site; it reads VLVLGAGVAGVSSAW.

Belongs to the DadA oxidoreductase family. FAD is required as a cofactor.

The catalysed reaction is a D-alpha-amino acid + A + H2O = a 2-oxocarboxylate + AH2 + NH4(+). Oxidative deamination of D-amino acids. This is D-amino acid dehydrogenase from Neisseria meningitidis serogroup A / serotype 4A (strain DSM 15465 / Z2491).